Here is a 330-residue protein sequence, read N- to C-terminus: Aspartate--ammonia ligase (330 aa).

This sequence belongs to the class-II aminoacyl-tRNA synthetase family. AsnA subfamily.

Its subcellular location is the cytoplasm. It catalyses the reaction L-aspartate + NH4(+) + ATP = L-asparagine + AMP + diphosphate + H(+). It functions in the pathway amino-acid biosynthesis; L-asparagine biosynthesis; L-asparagine from L-aspartate (ammonia route): step 1/1. The sequence is that of Aspartate--ammonia ligase from Yersinia pseudotuberculosis serotype O:1b (strain IP 31758).